The primary structure comprises 434 residues: Vi polysaccharide export inner-membrane protein VexD (434 aa).

Positions 1 to 50 (MENSERIKKWKEERAKVAQESRASRLQQKEDERALRQTEKSADAKSHHNP) are enriched in basic and acidic residues. Residues 1–58 (MENSERIKKWKEERAKVAQESRASRLQQKEDERALRQTEKSADAKSHHNPDAGWSATD) form a disordered region. A run of 2 helical transmembrane segments spans residues 84-104 (LFLYIALPLLVIMLMSWILTS) and 409-429 (WLLFFVLLGITYLVTSLLITI).

The protein belongs to the BexC/CtrB/KpsE family.

The protein localises to the cell inner membrane. Functionally, may form an ATP-driven capsule polysaccharide export apparatus, in association with the VexA, VexB and VexC proteins. This is Vi polysaccharide export inner-membrane protein VexD (vexD) from Salmonella typhi.